A 460-amino-acid chain; its full sequence is Argininosuccinate lyase (460 aa).

It belongs to the lyase 1 family. Argininosuccinate lyase subfamily.

It is found in the cytoplasm. The enzyme catalyses 2-(N(omega)-L-arginino)succinate = fumarate + L-arginine. Its pathway is amino-acid biosynthesis; L-arginine biosynthesis; L-arginine from L-ornithine and carbamoyl phosphate: step 3/3. In Lacticaseibacillus paracasei (strain ATCC 334 / BCRC 17002 / CCUG 31169 / CIP 107868 / KCTC 3260 / NRRL B-441) (Lactobacillus paracasei), this protein is Argininosuccinate lyase.